The following is a 48-amino-acid chain: Piguamerin (48 aa).

5 disulfides stabilise this stretch: cysteine 3–cysteine 14, cysteine 8–cysteine 19, cysteine 21–cysteine 41, cysteine 26–cysteine 45, and cysteine 30–cysteine 47. Residues 19 to 47 form the Antistasin-like domain; that stretch reads CVCVIGQCRKYCPNGFKKDENGCTFPCTC.

This sequence belongs to the protease inhibitor I15 (antistasin) family.

The protein localises to the secreted. Functionally, inhibits plasma and tissue kallikrein, and trypsin. May be involved in leech hematophagia. The protein is Piguamerin of Hirudo nipponia (Korean blood-sucking leech).